Consider the following 116-residue polypeptide: NADH-ubiquinone oxidoreductase chain 3 (116 aa).

Helical transmembrane passes span 10 to 30, 64 to 84, and 88 to 108; these read FLTLFVSILIFLITTLITFAA, FFLVAILFLLFDLEIALLFPL, and VFFHPIHTPLILTVGLIFEWV.

This sequence belongs to the complex I subunit 3 family.

It is found in the mitochondrion membrane. It catalyses the reaction a ubiquinone + NADH + 5 H(+)(in) = a ubiquinol + NAD(+) + 4 H(+)(out). Its function is as follows. Core subunit of the mitochondrial membrane respiratory chain NADH dehydrogenase (Complex I) that is believed to belong to the minimal assembly required for catalysis. Complex I functions in the transfer of electrons from NADH to the respiratory chain. The immediate electron acceptor for the enzyme is believed to be ubiquinone. This is NADH-ubiquinone oxidoreductase chain 3 (ND3) from Patiria pectinifera (Starfish).